The primary structure comprises 399 residues: Telomeric repeat-binding factor 2-interacting protein 1 (399 aa).

The residue at position 2 (A2) is an N-acetylalanine. S36 and S43 each carry phosphoserine. One can recognise a BRCT domain in the interval 78–101 (FISTQYILDCVERNERLELEAYRL). The tract at residues 104–132 (ASAADTGSEAKPGALAEGAAEPEPQRHAG) is disordered. Positions 112-125 (EAKPGALAEGAAEP) are enriched in low complexity. K114 is covalently cross-linked (Glycyl lysine isopeptide (Lys-Gly) (interchain with G-Cter in SUMO2)). The Myb-like domain occupies 128–188 (QRHAGRIAFT…SLKDRYLKHL (61 aa)). Phosphoserine occurs at positions 154 and 156. A Glycyl lysine isopeptide (Lys-Gly) (interchain with G-Cter in SUMO2) cross-link involves residue K194. 2 disordered regions span residues 196-244 (LLGD…EEIQ) and 264-311 (VVVD…QPEV). A phosphoserine mark is found at S203 and S206. Residues K208, K212, and K240 each participate in a glycyl lysine isopeptide (Lys-Gly) (interchain with G-Cter in SUMO2) cross-link. Acidic residues predominate over residues 280 to 304 (CDDDPPTPEEDSETQPDEEEEEEEE). A Glycyl lysine isopeptide (Lys-Gly) (interchain with G-Cter in SUMO2) cross-link involves residue K372. The Nuclear localization signal signature appears at 383–399 (KKFGAQNVARRIEFRKK).

This sequence belongs to the RAP1 family. In terms of assembly, associates with the I-kappa-B-kinase (IKK) core complex, composed of CHUK, IKBKB and IKBKG. Homodimer. Component of the shelterin complex (telosome) composed of TERF1, TERF2, TINF2, TERF2IP ACD and POT1. Interacts with TERF2; the interaction is direct. Does not interact with TERF1. Interacts with SLX4/BTBD12. Ubiquitous. Highly expressed.

The protein resides in the nucleus. It localises to the cytoplasm. The protein localises to the chromosome. It is found in the telomere. In terms of biological role, acts both as a regulator of telomere function and as a transcription regulator. Involved in the regulation of telomere length and protection as a component of the shelterin complex (telosome). In contrast to other components of the shelterin complex, it is dispensible for telomere capping and does not participate in the protection of telomeres against non-homologous end-joining (NHEJ)-mediated repair. Instead, it is required to negatively regulate telomere recombination and is essential for repressing homology-directed repair (HDR), which can affect telomere length. Does not bind DNA directly: recruited to telomeric double-stranded 5'-TTAGGG-3' repeats via its interaction with TERF2. Independently of its function in telomeres, also acts as a transcription regulator: recruited to extratelomeric 5'-TTAGGG-3' sites via its association with TERF2 or other factors, and regulates gene expression. When cytoplasmic, associates with the I-kappa-B-kinase (IKK) complex and acts as a regulator of the NF-kappa-B signaling by promoting IKK-mediated phosphorylation of RELA/p65, leading to activate expression of NF-kappa-B target genes. The sequence is that of Telomeric repeat-binding factor 2-interacting protein 1 (TERF2IP) from Homo sapiens (Human).